Consider the following 192-residue polypeptide: uncharacterized protein (192 aa).

The protein to A.aeolicus AQ_054.

This is an uncharacterized protein from Thermotoga maritima (strain ATCC 43589 / DSM 3109 / JCM 10099 / NBRC 100826 / MSB8).